The chain runs to 349 residues: Alpha-centractin (349 aa).

Position 1 is an N-acetylmethionine (Met-1).

The protein belongs to the actin family. ARP1 subfamily. As to quaternary structure, part of the ACTR1A/ACTB filament around which the dynactin complex is built. The filament contains 8 copies of ACTR1A and 1 ACTB. Interacts with dynein and adapters such as BICD2. Interacts with BCCIP (isoform 2/alpha).

The protein resides in the cytoplasm. Its subcellular location is the cytoskeleton. The protein localises to the microtubule organizing center. It is found in the centrosome. It localises to the cell cortex. Functionally, part of the ACTR1A/ACTB filament around which the dynactin complex is built. The dynactin multiprotein complex activates the molecular motor dynein for ultra-processive transport along microtubules. The chain is Alpha-centractin (ACTR1A) from Sus scrofa (Pig).